The sequence spans 256 residues: uncharacterized protein (256 aa).

An N-terminal signal peptide occupies residues 1 to 22 (MNNFRQCALCIGTSVLILLVSG). The N-palmitoyl cysteine moiety is linked to residue C23. C23 carries S-diacylglycerol cysteine lipidation.

This sequence belongs to the staphylococcal tandem lipoprotein family.

The protein localises to the cell membrane. This is an uncharacterized protein from Staphylococcus aureus (strain bovine RF122 / ET3-1).